The following is a 238-amino-acid chain: tRNA (guanine-N(7)-)-methyltransferase (238 aa).

S-adenosyl-L-methionine-binding residues include Glu-68, Glu-93, Asp-120, and Asp-143. Asp-143 is an active-site residue. Residues Lys-147, Asp-179, and 216–219 (TKFE) each bind substrate.

It belongs to the class I-like SAM-binding methyltransferase superfamily. TrmB family.

It catalyses the reaction guanosine(46) in tRNA + S-adenosyl-L-methionine = N(7)-methylguanosine(46) in tRNA + S-adenosyl-L-homocysteine. Its pathway is tRNA modification; N(7)-methylguanine-tRNA biosynthesis. Functionally, catalyzes the formation of N(7)-methylguanine at position 46 (m7G46) in tRNA. The polypeptide is tRNA (guanine-N(7)-)-methyltransferase (Shewanella baltica (strain OS155 / ATCC BAA-1091)).